Here is a 337-residue protein sequence, read N- to C-terminus: Zinc finger protein Gfi-1b (337 aa).

Residues 1-20 (MPRSFLVKSKKAHTYHQHRF) form a mediates repression of transcription region. The SNAG domain stretch occupies residues 1–20 (MPRSFLVKSKKAHTYHQHRF). 6 consecutive C2H2-type zinc fingers follow at residues 170–193 (YHCV…RRSH), 199–221 (FACE…TNIH), 227–249 (FECK…LLIH), 255–277 (YPCQ…TYIH), 283–305 (HKCQ…SRKH), and 311–334 (FSCE…ETQH).

As to expression, expressed in erythroid cells of primitive and definitive lineage and bone marrow cells.

It is found in the nucleus. In terms of biological role, essential transcriptional regulator necessary for development and differentiation of erythroid and megakaryocytic lineages. Alters histone methylation by recruiting histone methyltransferase to target genes promoters. Plays a role in heterochromatin formation. The chain is Zinc finger protein Gfi-1b (GFI1B) from Gallus gallus (Chicken).